Here is a 206-residue protein sequence, read N- to C-terminus: Small ribosomal subunit protein uS4 (206 aa).

Positions 94–157 (RRLDNVVYRL…RSRTYFKNLV (64 aa)) constitute an S4 RNA-binding domain.

Belongs to the universal ribosomal protein uS4 family. In terms of assembly, part of the 30S ribosomal subunit. Contacts protein S5. The interaction surface between S4 and S5 is involved in control of translational fidelity.

Functionally, one of the primary rRNA binding proteins, it binds directly to 16S rRNA where it nucleates assembly of the body of the 30S subunit. With S5 and S12 plays an important role in translational accuracy. The polypeptide is Small ribosomal subunit protein uS4 (Chloroflexus aurantiacus (strain ATCC 29364 / DSM 637 / Y-400-fl)).